A 285-amino-acid chain; its full sequence is Ribonuclease H1 (285 aa).

Residues 72–122 (RSSSSPDGSKGQESAHVQKLQVKTSKRPREPLGEEEEPPEPGAKHTRQDTE) form a disordered region. The 147-residue stretch at 135-281 (MGESVVVYTD…ADRLAREGAK (147 aa)) folds into the RNase H type-1 domain. Mg(2+) is bound by residues D144, E185, D209, and D273.

Belongs to the RNase H family. In terms of assembly, monomer. The cofactor is Mg(2+).

The protein localises to the cytoplasm. The enzyme catalyses Endonucleolytic cleavage to 5'-phosphomonoester.. Its activity is regulated as follows. In the presence of magnesium, manganese is inhibitory. Endonuclease that specifically degrades the RNA of RNA-DNA hybrids. Plays a role in RNA polymerase II (RNAp II) transcription termination by degrading R-loop RNA-DNA hybrid formation at G-rich pause sites located downstream of the poly(A) site and behind the elongating RNAp II. This is Ribonuclease H1 (Rnaseh1) from Rattus norvegicus (Rat).